Consider the following 686-residue polypeptide: Antigen peptide transporter 2 (686 aa).

At 1 to 6 the chain is on the lumenal side; it reads MRLPDL. The helical transmembrane segment at 7–27 threads the bilayer; that stretch reads RPWTSLLLVDAALLWLLQGPL. Topologically, residues 28–56 are cytoplasmic; it reads GTLLPQGLPGLWLEGTLRLGGLWGLLKLR. A helical transmembrane segment spans residues 57–77; that stretch reads GLLGFVGTLLLPLCLATPLTV. Residues 78 to 98 are Lumenal-facing; sequence SLRALVAGASRAPPARVASAP. The helical transmembrane segment at 99–119 threads the bilayer; it reads WSWLLVGYGAAGLSWSLWAVL. Residues 120–148 are Cytoplasmic-facing; the sequence is SPPGAQEKEQDQVNNKVLMWRLLKLSRPD. A helical membrane pass occupies residues 149 to 169; the sequence is LPLLVAAFFFLVLAVLGETLI. In terms of domain architecture, ABC transmembrane type-1 spans 152-435; that stretch reads LVAAFFFLVL…LVYIYGDMLS (284 aa). Topologically, residues 170–187 are lumenal; it reads PHYSGRVIDILGGDFDPH. The helical transmembrane segment at 188–208 threads the bilayer; that stretch reads AFASAIFFMCLFSFGSSLSAG. Topologically, residues 209–266 are cytoplasmic; that stretch reads CRGGCFTYTMSRINLRIREQLFSSLLRQDLGFFQETKTGELNSRLSSDTTLMSNWLPL. Residues 267–287 traverse the membrane as a helical segment; the sequence is NANVLLRSLVKVVGLYGFMLS. Residues 288–293 lie on the Lumenal side of the membrane; that stretch reads ISPRLT. A helical membrane pass occupies residues 294-314; sequence LLSLLHMPFTIAAEKVYNTRH. Residues 301–389 are part of the peptide-binding site; that stretch reads PFTIAAEKVY…RRVLHLGVQM (89 aa). Topologically, residues 315 to 374 are cytoplasmic; sequence QEVLREIQDAVARAGQVVREAVGGLQTVRSFGAEEHEVCRYKEALEQCRQLYWRRDLERA. A helical membrane pass occupies residues 375 to 395; sequence LYLLVRRVLHLGVQMLMLSCG. At 396–408 the chain is on the lumenal side; it reads LQQMQDGELTQGS. Residues 409 to 429 traverse the membrane as a helical segment; it reads LLSFMIYQESVGSYVQTLVYI. A part of the peptide-binding site region spans residues 414–433; the sequence is IYQESVGSYVQTLVYIYGDM. Residues 430 to 686 lie on the Cytoplasmic side of the membrane; sequence YGDMLSNVGA…EGKLQKLAQL (257 aa). The ABC transporter domain maps to 468-686; it reads VKFQDVSFAY…EGKLQKLAQL (219 aa). 503 to 510 is a binding site for ATP; it reads GPNGSGKS.

Belongs to the ABC transporter superfamily. ABCB family. MHC peptide exporter (TC 3.A.1.209) subfamily. As to quaternary structure, heterodimer of TAP1 and TAP2 (TAP1-TAP2). A component of the peptide loading complex (PLC), interacts via TAPBP with MHCI heterodimer; this interaction mediates peptide-MHCI assembly. Recruits TAPBP in a 1:1 stoichiometry. Interacts with classical MHCI such as HLA-A*02-B2M; this interaction is obligatory for the loading of peptide epitopes. Interacts with non-classical MHCI molecules including HLA-E-B2M and HLA-F-B2M as well as PLC component CALR before the peptide loading. In terms of assembly, (Microbial infection) Interacts with Epstein-Barr virus BLNF2a. (Microbial infection) Interacts with herpes simplex virus US12/ICP47. As to quaternary structure, (Microbial infection) Interacts with adenovirus E3-19K glycoprotein, which binds TAP1-TAP2 and acts as a TAPBP inhibitor, preventing TAP1-TAP2 association with MHCI. Requires Mg(2+) as cofactor.

The protein resides in the endoplasmic reticulum membrane. The enzyme catalyses a peptide antigen(in) + ATP + H2O = a peptide antigen(out) + ADP + phosphate + H(+). Inhibited at high ER lumenal peptide concentrations. Its activity is regulated as follows. (Microbial infection) Inhibited by herpes simplex virus US12/ICP47 protein, which blocks the peptide-binding site of TAP1-TAP2. With respect to regulation, (Microbial infection) Inhibited by human cytomegalovirus US6 glycoprotein, which binds to the lumenal side of TAP1-TAP2 complex and inhibits peptide translocation by specifically blocking ATP-binding and preventing TAP1-TAP2 conformational rearrangement induced by peptide binding. Its function is as follows. ABC transporter associated with antigen processing. In complex with TAP1 mediates unidirectional translocation of peptide antigens from cytosol to endoplasmic reticulum (ER) for loading onto MHC class I (MHCI) molecules. Uses the chemical energy of ATP to export peptides against the concentration gradient. During the transport cycle alternates between 'inward-facing' state with peptide binding site facing the cytosol to 'outward-facing' state with peptide binding site facing the ER lumen. Peptide antigen binding to ATP-loaded TAP1-TAP2 induces a switch to hydrolysis-competent 'outward-facing' conformation ready for peptide loading onto nascent MHCI molecules. Subsequently ATP hydrolysis resets the transporter to the 'inward facing' state for a new cycle. Typically transports intracellular peptide antigens of 8 to 13 amino acids that arise from cytosolic proteolysis via IFNG-induced immunoproteasome. Binds peptides with free N- and C-termini, the first three and the C-terminal residues being critical. Preferentially selects peptides having a highly hydrophobic residue at position 3 and hydrophobic or charged residues at the C-terminal anchor. Proline at position 2 has the most destabilizing effect. As a component of the peptide loading complex (PLC), acts as a molecular scaffold essential for peptide-MHCI assembly and antigen presentation. This Homo sapiens (Human) protein is Antigen peptide transporter 2.